The chain runs to 294 residues: Polyketide transferase grgF (294 aa).

Active-site residues include cysteine 115, aspartate 240, and histidine 269.

Belongs to the polyketide transferase af380 family. In terms of assembly, homodimer.

Its pathway is secondary metabolite biosynthesis. Polyketide transferase; part of the gene cluster that mediates the biosynthesis of gregatin A, a fungal polyketide featuring an alkylated furanone core. The PKS grgA synthesizes C11 and C4 polyketide chains in the presence and absence of the trans-enoyl reductase grgB, respectively. The polyketide transferase grgF is then responsible for the fusion of the two carbon chains to produce the furanone skeleton of gregatin A. GrgF first undergoes a conformational change to an open form, and the active site Cys-115 is acylated by the C11 chain. After the elimination of the phosphopantetheinyl chain, the second polyketide chain of four carbons long is delivered adjacent to the enzyme-bound C11 chain. The catalytic histidine, His-269, deprotonates a proton from C-2 of the long chain, and the resultant carbanion attacks the C-1 carbonyl of the crotonyl group to perform Claisen condensation, by which the phosphopantetheinyl chain is released. Eventually, hydrolysis of the thioester linkage probably by a His-269-activated water molecule completes the reaction to afford the grgF final product. Next, the cytochrome P450 monooxygenase grgG accepts the unstable grgF final product as substrate and performs the oxidative cyclization to furnish the gregatin scaffold and leads to the formation of desmethylgregatin A. Finally, the O-methyltransferase grgD methylates the carboxyl group of desmethylgregatin A to provide gregatin A. This chain is Polyketide transferase grgF, found in Penicillium sp.